The primary structure comprises 794 residues: Lon protease (794 aa).

The 192-residue stretch at 13–204 (VPLYPLREII…KVYMHLTNEV (192 aa)) folds into the Lon N-terminal domain. 356–363 (GPPGVGKT) is an ATP binding site. The 182-residue stretch at 592–773 (KDRVGVATGL…REVFVQALNP (182 aa)) folds into the Lon proteolytic domain. Active-site residues include Ser-679 and Lys-722. Low complexity predominate over residues 774–788 (TSPAPTAATSARTPA). The interval 774–794 (TSPAPTAATSARTPAGAPPPQ) is disordered.

This sequence belongs to the peptidase S16 family. As to quaternary structure, homohexamer. Organized in a ring with a central cavity.

The protein localises to the cytoplasm. It catalyses the reaction Hydrolysis of proteins in presence of ATP.. ATP-dependent serine protease that mediates the selective degradation of mutant and abnormal proteins as well as certain short-lived regulatory proteins. Required for cellular homeostasis and for survival from DNA damage and developmental changes induced by stress. Degrades polypeptides processively to yield small peptide fragments that are 5 to 10 amino acids long. Binds to DNA in a double-stranded, site-specific manner. The sequence is that of Lon protease from Citrifermentans bemidjiense (strain ATCC BAA-1014 / DSM 16622 / JCM 12645 / Bem) (Geobacter bemidjiensis).